A 284-amino-acid chain; its full sequence is AA14 family lytic polysaccharide monooxygenase B (284 aa).

The first 20 residues, 1-20, serve as a signal peptide directing secretion; it reads MGYLSKLVTSVVFAIPLASA. Residues Asn-42, Asn-96, Asn-142, and Asn-183 are each glycosylated (N-linked (GlcNAc...) asparagine). Cysteines 197 and 218 form a disulfide.

This sequence belongs to the polysaccharide monooxygenase AA14 family. It depends on Cu(2+) as a cofactor.

The protein resides in the secreted. Functionally, lytic polysaccharide monooxygenase (LPMO) that plays decomposes some specific network structures formed between cellulose and hemicellulose in the plant cell walls. Catalysis by LPMOs requires the reduction of the active-site copper from Cu(II) to Cu(I) by a reducing agent and H(2)O(2) or O(2) as a cosubstrate. The chain is AA14 family lytic polysaccharide monooxygenase B from Talaromyces rugulosus (Penicillium rugulosum).